A 150-amino-acid polypeptide reads, in one-letter code: Transcriptional repressor NrdR (150 aa).

A zinc finger lies at 3–34 (CPFCNFEESKVVDSRATDDNTTIRRRRECLNC). The region spanning 49 to 139 (VLVVKKDLTR…VYRQFKDINT (91 aa)) is the ATP-cone domain.

The protein belongs to the NrdR family. It depends on Zn(2+) as a cofactor.

Functionally, negatively regulates transcription of bacterial ribonucleotide reductase nrd genes and operons by binding to NrdR-boxes. In Clostridium botulinum (strain Alaska E43 / Type E3), this protein is Transcriptional repressor NrdR.